The sequence spans 368 residues: Chaperone protein DnaJ (368 aa).

Residues Asp-5–Gly-69 form the J domain. The CR-type zinc finger occupies Gly-126–Lys-208. 8 residues coordinate Zn(2+): Cys-139, Cys-142, Cys-156, Cys-159, Cys-182, Cys-185, Cys-196, and Cys-199. CXXCXGXG motif repeat units lie at residues Cys-139 to Gly-146, Cys-156 to Gly-163, Cys-182 to Gly-189, and Cys-196 to Gly-203.

It belongs to the DnaJ family. Homodimer. It depends on Zn(2+) as a cofactor.

It localises to the cytoplasm. Its function is as follows. Participates actively in the response to hyperosmotic and heat shock by preventing the aggregation of stress-denatured proteins and by disaggregating proteins, also in an autonomous, DnaK-independent fashion. Unfolded proteins bind initially to DnaJ; upon interaction with the DnaJ-bound protein, DnaK hydrolyzes its bound ATP, resulting in the formation of a stable complex. GrpE releases ADP from DnaK; ATP binding to DnaK triggers the release of the substrate protein, thus completing the reaction cycle. Several rounds of ATP-dependent interactions between DnaJ, DnaK and GrpE are required for fully efficient folding. Also involved, together with DnaK and GrpE, in the DNA replication of plasmids through activation of initiation proteins. This is Chaperone protein DnaJ from Exiguobacterium sp. (strain ATCC BAA-1283 / AT1b).